The sequence spans 238 residues: Probable tetraspanin tspC (238 aa).

The Cytoplasmic segment spans residues 1–16 (MVNTRDFLPKTTHYLK). Residues 17 to 37 (VPIIGLNAILWLLGLVLIVVG) form a helical membrane-spanning segment. Residues 38–69 (SVCISFFSNFKEFTKESGYKNALSNLTTSAPT) lie on the Extracellular side of the membrane. Asn-62 carries N-linked (GlcNAc...) asparagine glycosylation. Residues 70–90 (GVLVIGIFFILLTLVGCFVAY) form a helical membrane-spanning segment. Topologically, residues 91-93 (KEK) are cytoplasmic. Residues 94 to 114 (LVGLVLYTMLMLILLVVLIGI) traverse the membrane as a helical segment. The Extracellular segment spans residues 115 to 197 (GGKALTLDKE…GIFTKQVSSK (83 aa)). N-linked (GlcNAc...) asparagine glycosylation is found at Asn-143 and Asn-164. Residues 198–218 (LVLVGIAGVVIGCIEFVAMAL) traverse the membrane as a helical segment. Residues 219-238 (SLFLIIRICRSPRSRAYDQY) lie on the Cytoplasmic side of the membrane.

This sequence belongs to the tetraspanin (TM4SF) family.

The protein localises to the membrane. The chain is Probable tetraspanin tspC (tspC) from Dictyostelium discoideum (Social amoeba).